The primary structure comprises 87 residues: Small ribosomal subunit protein bS20 (87 aa).

The interval Met-1 to Leu-28 is disordered.

The protein belongs to the bacterial ribosomal protein bS20 family.

Functionally, binds directly to 16S ribosomal RNA. This is Small ribosomal subunit protein bS20 from Mycobacterium marinum (strain ATCC BAA-535 / M).